Reading from the N-terminus, the 187-residue chain is Ribosome-recycling factor (187 aa).

It belongs to the RRF family.

It localises to the cytoplasm. Functionally, responsible for the release of ribosomes from messenger RNA at the termination of protein biosynthesis. May increase the efficiency of translation by recycling ribosomes from one round of translation to another. The protein is Ribosome-recycling factor of Flavobacterium psychrophilum (strain ATCC 49511 / DSM 21280 / CIP 103535 / JIP02/86).